A 142-amino-acid chain; its full sequence is Ribonuclease VapC25 (142 aa).

The 137-residue stretch at Leu3–Arg139 folds into the PINc domain. Mg(2+) contacts are provided by Asp5 and Asp108.

The protein belongs to the PINc/VapC protein family. Requires Mg(2+) as cofactor.

Functionally, toxic component of a type II toxin-antitoxin (TA) system. An RNase. Upon expression in M.smegmatis inhibits colony formation. Its toxic effect is neutralized by coexpression with cognate antitoxin VapB25. This is Ribonuclease VapC25 from Mycobacterium tuberculosis (strain ATCC 25618 / H37Rv).